Here is a 150-residue protein sequence, read N- to C-terminus: SsrA-binding protein (150 aa).

This sequence belongs to the SmpB family.

It is found in the cytoplasm. Required for rescue of stalled ribosomes mediated by trans-translation. Binds to transfer-messenger RNA (tmRNA), required for stable association of tmRNA with ribosomes. tmRNA and SmpB together mimic tRNA shape, replacing the anticodon stem-loop with SmpB. tmRNA is encoded by the ssrA gene; the 2 termini fold to resemble tRNA(Ala) and it encodes a 'tag peptide', a short internal open reading frame. During trans-translation Ala-aminoacylated tmRNA acts like a tRNA, entering the A-site of stalled ribosomes, displacing the stalled mRNA. The ribosome then switches to translate the ORF on the tmRNA; the nascent peptide is terminated with the 'tag peptide' encoded by the tmRNA and targeted for degradation. The ribosome is freed to recommence translation, which seems to be the essential function of trans-translation. In Thermotoga maritima (strain ATCC 43589 / DSM 3109 / JCM 10099 / NBRC 100826 / MSB8), this protein is SsrA-binding protein.